We begin with the raw amino-acid sequence, 202 residues long: Matrix protein (202 aa).

The PPXY motif motif lies at 35 to 38; that stretch reads PPEY. Residues 115–151 are essential for glycoprotein binding; that stretch reads KIRRTLVFQWAESRGPLDGEELEYSQEITWDDDSEFI.

The protein belongs to the lyssavirus matrix protein family. Homomultimer. Interacts with nucleoprotein and with the cytoplasmic domain of glycoprotein.

The protein localises to the virion membrane. Its subcellular location is the host endomembrane system. Functionally, plays a major role in assembly and budding of virion. Completely covers the ribonucleoprotein coil and keep it in condensed bullet-shaped form. Inhibits viral transcription and stimulates replication. Plays a major role in early induction of TRAIL-mediated apoptosis in infected neurons. This is Matrix protein (M) from Aravan virus (ARAV).